The chain runs to 164 residues: Protein SprT (164 aa).

In terms of domain architecture, SprT-like spans 14-156; sequence QQAETFFKRP…LCKRCRETLV (143 aa). Histidine 69 serves as a coordination point for Zn(2+). The active site involves glutamate 70. Histidine 73 serves as a coordination point for Zn(2+).

It belongs to the SprT family. Zn(2+) serves as cofactor.

The protein resides in the cytoplasm. The protein is Protein SprT of Pseudomonas putida (strain W619).